Here is a 622-residue protein sequence, read N- to C-terminus: ATP-dependent lipid A-core flippase (622 aa).

5 helical membrane passes run 32–52, 91–111, 192–212, 286–306, and 312–332; these read IVAA…LAAF, VWGT…LVVI, IVLL…FPLL, SPFS…IALW, and YTTI…YAPI. An ABC transmembrane type-1 domain is found at 33–344; sequence VAALIAIFGV…LANISIPMQT (312 aa). Positions 378–611 constitute an ABC transporter domain; sequence FRNVDVEYRS…NGYYTMLRNI (234 aa). 410–417 contacts ATP; the sequence is GRSGSGKS.

The protein belongs to the ABC transporter superfamily. Lipid exporter (TC 3.A.1.106) family. In terms of assembly, homodimer.

The protein resides in the cell inner membrane. The catalysed reaction is ATP + H2O + lipid A-core oligosaccharideSide 1 = ADP + phosphate + lipid A-core oligosaccharideSide 2.. Functionally, involved in lipopolysaccharide (LPS) biosynthesis. Translocates lipid A-core from the inner to the outer leaflet of the inner membrane. Transmembrane domains (TMD) form a pore in the inner membrane and the ATP-binding domain (NBD) is responsible for energy generation. The polypeptide is ATP-dependent lipid A-core flippase (Neisseria gonorrhoeae (strain ATCC 700825 / FA 1090)).